The sequence spans 147 residues: Hemoglobin subunit gamma (147 aa).

Residues 3 to 147 (HFTAEEKAAI…VATALAHKYH (145 aa)) form the Globin domain. 2 residues coordinate heme b: His64 and His93.

It belongs to the globin family. Heterotetramer of two alpha chains and two gamma chains. Red blood cells.

Its function is as follows. This protein functions as an embryonic globin, but the gene structure and chromosomal location resemble more closely the human gamma chain gene, which codes for a fetal globin. This Oryctolagus cuniculus (Rabbit) protein is Hemoglobin subunit gamma (HBG).